The following is a 201-amino-acid chain: 3-isopropylmalate dehydratase small subunit (201 aa).

This sequence belongs to the LeuD family. LeuD type 1 subfamily. As to quaternary structure, heterodimer of LeuC and LeuD.

It carries out the reaction (2R,3S)-3-isopropylmalate = (2S)-2-isopropylmalate. It participates in amino-acid biosynthesis; L-leucine biosynthesis; L-leucine from 3-methyl-2-oxobutanoate: step 2/4. Its function is as follows. Catalyzes the isomerization between 2-isopropylmalate and 3-isopropylmalate, via the formation of 2-isopropylmaleate. This Azorhizobium caulinodans (strain ATCC 43989 / DSM 5975 / JCM 20966 / LMG 6465 / NBRC 14845 / NCIMB 13405 / ORS 571) protein is 3-isopropylmalate dehydratase small subunit.